Consider the following 374-residue polypeptide: Ribosomal RNA large subunit methyltransferase G (374 aa).

Belongs to the methyltransferase superfamily. RlmG family.

The protein resides in the cytoplasm. The catalysed reaction is guanosine(1835) in 23S rRNA + S-adenosyl-L-methionine = N(2)-methylguanosine(1835) in 23S rRNA + S-adenosyl-L-homocysteine + H(+). Its function is as follows. Specifically methylates the guanine in position 1835 (m2G1835) of 23S rRNA. This Pseudomonas aeruginosa (strain UCBPP-PA14) protein is Ribosomal RNA large subunit methyltransferase G.